The sequence spans 184 residues: Peptide deformylase (184 aa).

The Fe cation site is built by Cys92 and His134. Residue Glu135 is part of the active site. Residue His138 coordinates Fe cation.

Belongs to the polypeptide deformylase family. The cofactor is Fe(2+).

The enzyme catalyses N-terminal N-formyl-L-methionyl-[peptide] + H2O = N-terminal L-methionyl-[peptide] + formate. Removes the formyl group from the N-terminal Met of newly synthesized proteins. Requires at least a dipeptide for an efficient rate of reaction. N-terminal L-methionine is a prerequisite for activity but the enzyme has broad specificity at other positions. This Psychrobacter arcticus (strain DSM 17307 / VKM B-2377 / 273-4) protein is Peptide deformylase.